We begin with the raw amino-acid sequence, 104 residues long: AVIToxin-VAR1 (104 aa).

An N-terminal signal peptide occupies residues 1 to 19 (MRSLLCAPLLLLLLSAGES). Cystine bridges form between Cys26–Cys38, Cys32–Cys50, Cys37–Cys78, Cys60–Cys86, and Cys80–Cys96.

Belongs to the AVIT (prokineticin) family. Expressed by the venom gland.

It is found in the secreted. Its function is as follows. Potent agonist for both PKR1/PROKR1 and PKR2/PROKR2. Potently contracts gastrointestinal (GI) smooth muscle. The protein is AVIToxin-VAR1 of Varanus varius (Lace monitor lizard).